A 540-amino-acid polypeptide reads, in one-letter code: Keratin, type II cytoskeletal 73 (540 aa).

Residues 1–131 (MSRQFTYKSG…DPEIQKVCAQ (131 aa)) form a head region. Positions 132 to 167 (EREQIKALNNKFASFIDKVRFLEQQNQVLGTKWELL) are coil 1A. In terms of domain architecture, IF rod spans 132 to 445 (EREQIKALNN…KLLEGEECRM (314 aa)). Residues 168 to 186 (QQQDLDNCKNNLEPILEGY) form a linker 1 region. The coil 1B stretch occupies residues 187-278 (ISNLRKQLEM…CLYEGEIAQM (92 aa)). Residues 279–302 (QSHISDTSVILSMDNNRNLDLNSI) form a linker 12 region. Residues 303-441 (IAEVRAQYED…ATYRKLLEGE (139 aa)) are coil 2. Positions 442 to 540 (ECRMSGEYTN…LSSPTKKTPR (99 aa)) are tail. The interval 509–540 (GEAKTRLGSTSEIKDLLGKTPALSSPTKKTPR) is disordered. The segment covering 530 to 540 (ALSSPTKKTPR) has biased composition (polar residues).

The protein belongs to the intermediate filament family. In terms of assembly, heterotetramer of two type I and two type II keratins.

In terms of biological role, has a role in hair formation. Specific component of keratin intermediate filaments in the inner root sheath (IRS) of the hair follicle. This Bos taurus (Bovine) protein is Keratin, type II cytoskeletal 73 (KRT73).